Here is a 308-residue protein sequence, read N- to C-terminus: Cyclopropane mycolic acid synthase 2 (308 aa).

S-adenosyl-L-methionine contacts are provided by residues 44-45 (YS), 79-87 (LLDIGCGWG), 105-110 (TLSANQ), and 137-138 (WE). Cysteine 290 is an active-site residue.

The protein belongs to the CFA/CMAS family. As to quaternary structure, homodimer.

It is found in the cytoplasm. It catalyses the reaction a 1-acyl-2-(9Z)-enoyl-sn-glycero-3-phospholipid + S-adenosyl-L-methionine = a 1-acyl-2-(9-cyclopronane)-acyl-sn-glycero-3-phospholipid + S-adenosyl-L-homocysteine + H(+). Its pathway is lipid metabolism; mycolic acid biosynthesis. In terms of biological role, catalyzes the formation of trans cyclopropanated ketomycolate or methoxymycolate through the conversion of a double bond to a cyclopropane ring at the proximal position of an oxygenated mycolic acid via the transfer of a methylene group from S-adenosyl-L-methionine. In the absence of MmaA2, CmaA2 has a non-specific cis-cyclopropanating activity and is able to catalyze the conversion of a double bond to a cis cyclopropane ring at the distal position of an alpha mycolic acid. Cyclopropanated mycolic acids are key factors participating in cell envelope permeability, host immunomodulation and persistence. The protein is Cyclopropane mycolic acid synthase 2 (cmaA2) of Mycobacterium leprae (strain TN).